Reading from the N-terminus, the 102-residue chain is RNA-binding protein Hfq (102 aa).

Residues 9–68 (DPFLNALRRERVPVSIYLVNGIKLQGQIESFDQFVILLKNTVSQMVYKHAISTVVPSRPV) enclose the Sm domain. A disordered region spans residues 63-102 (VPSRPVSHHSNNASGGTSSNYHHGSSAQNTSAQQDSEETE). The span at 70 to 96 (HHSNNASGGTSSNYHHGSSAQNTSAQQ) shows a compositional bias: polar residues.

This sequence belongs to the Hfq family. Homohexamer.

RNA chaperone that binds small regulatory RNA (sRNAs) and mRNAs to facilitate mRNA translational regulation in response to envelope stress, environmental stress and changes in metabolite concentrations. Also binds with high specificity to tRNAs. This Shigella boydii serotype 18 (strain CDC 3083-94 / BS512) protein is RNA-binding protein Hfq.